Consider the following 1072-residue polypeptide: 5'-3' exoribonuclease 2 (1072 aa).

Residues 118–144 (RRFRAAREAMEKEEDKQKFVELLKKQN) are a coiled coil. The CCHC-type zinc finger occupies 269-286 (RLCKICGQKGHDAMNCKG). Positions 414–435 (KETEDRREAGFKRRKLADEARQ) are enriched in basic and acidic residues. 4 disordered regions span residues 414–459 (KETE…GFSF), 509–577 (QGTS…AEPT), 865–911 (ASRS…GGGG), and 943–1072 (GGGY…RGYR). Positions 518–543 (AESTETPAETAAAAPATEEQAAPPAA) are enriched in low complexity. Residues 892 to 911 (GPGGGQQGGRGRGGYQGGGG) show a composition bias toward gly residues. Positions 955–967 (GPPPGWQPPPPPG) are enriched in pro residues. Gly residues-rich tracts occupy residues 983–1000 (AYGG…GSSR), 1025–1036 (YGQGGSRGGYQG), and 1056–1072 (GYRG…RGYR).

This sequence belongs to the 5'-3' exonuclease family. XRN2/RAT1 subfamily. Interacts with rai1; the interaction is direct, stabilizes exr-1 protein structure and may stimulate its exoribonuclease activity. The interaction also stimulates rai1 pyrophosphohydrolase activity, probably by recruiting it to mRNA substrates.

Its subcellular location is the nucleus. Possesses 5'-&gt;3' exoribonuclease activity. Required for the processing of nuclear mRNA and rRNA precursors. May promote the termination of transcription by RNA polymerase II. Essential for vegetative cell growth and chromosome segregation. The sequence is that of 5'-3' exoribonuclease 2 (exr-1) from Neurospora crassa (strain ATCC 24698 / 74-OR23-1A / CBS 708.71 / DSM 1257 / FGSC 987).